A 734-amino-acid chain; its full sequence is DNA replication licensing factor MCM5 (734 aa).

Ser2 carries the N-acetylserine modification. Ser315 is modified (phosphoserine). One can recognise an MCM domain in the interval Val331 to Ile537. Arg371 is an ADP binding site. Lys392 and Lys396 each carry N6-acetyllysine. The residue at position 605 (Ser605) is a Phosphoserine. Position 696 is an N6-acetyllysine (Lys696).

Belongs to the MCM family. In terms of assembly, component of the MCM2-7 complex. The complex forms a toroidal hexameric ring with the proposed subunit order MCM2-MCM6-MCM4-MCM7-MCM3-MCM5. Component of the CMG helicase complex, a hexameric ring of related MCM2-7 subunits stabilized by CDC45 and the tetrameric GINS complex. Interacts with ANKRD17. Interacts with MCMBP. Interacts with TONSL; the interaction is direct.

It localises to the nucleus. The protein localises to the chromosome. It catalyses the reaction ATP + H2O = ADP + phosphate + H(+). Functionally, acts as a component of the MCM2-7 complex (MCM complex) which is the replicative helicase essential for 'once per cell cycle' DNA replication initiation and elongation in eukaryotic cells. Core component of CDC45-MCM-GINS (CMG) helicase, the molecular machine that unwinds template DNA during replication, and around which the replisome is built. The active ATPase sites in the MCM2-7 ring are formed through the interaction surfaces of two neighboring subunits such that a critical structure of a conserved arginine finger motif is provided in trans relative to the ATP-binding site of the Walker A box of the adjacent subunit. The six ATPase active sites, however, are likely to contribute differentially to the complex helicase activity. The sequence is that of DNA replication licensing factor MCM5 (MCM5) from Homo sapiens (Human).